The primary structure comprises 352 residues: Carbohydrate sulfotransferase 11 (352 aa).

Over 1 to 16 the chain is Cytoplasmic; it reads MKQTILDLMRMSRICR. The chain crosses the membrane as a helical; Signal-anchor for type II membrane protein span at residues 17 to 37; the sequence is MVLATCLGSFILVIFYFQSMF. The Lumenal portion of the chain corresponds to 38–352; sequence QPVMRRNPFA…YSIPSYLKLQ (315 aa). Residues 124–130 and 186–194 each bind 3'-phosphoadenylyl sulfate; these read PKVACTN and REPFERLVS. N-linked (GlcNAc...) asparagine glycans are attached at residues N205, N223, N321, and N342.

It belongs to the sulfotransferase 2 family.

The protein resides in the golgi apparatus membrane. It catalyses the reaction chondroitin beta-D-glucuronate + n 3'-phosphoadenylyl sulfate = chondroitin 4'-sulfate + n adenosine 3',5'-bisphosphate + n H(+). In terms of biological role, catalyzes the transfer of sulfate to position 4 of the N-acetylgalactosamine (GalNAc) residue of chondroitin. The polypeptide is Carbohydrate sulfotransferase 11 (chst11) (Danio rerio (Zebrafish)).